The following is a 475-amino-acid chain: FAD-dependent monooxygenase penE (475 aa).

The FAD site is built by E35, G49, and R108. Y216 is a catalytic residue. FAD is bound by residues D308 and A321. An N-linked (GlcNAc...) asparagine glycan is attached at N437. The helical transmembrane segment at 446-466 threads the bilayer; that stretch reads WGSIWLSPVILCLFCMLFLWP.

This sequence belongs to the paxM FAD-dependent monooxygenase family. It depends on FAD as a cofactor.

Its subcellular location is the membrane. It catalyses the reaction [(1'E)-3'-hydroxy-3',7'-dimethylocta-1',6'-dien-1'-yl]-quinolinone B + NADPH + O2 + H(+) = [(1'E)-5'-(3',3'-dimethyloxiran-2'-yl)-3'-hydroxy-3'-methylpent-1'-en-1'-yl]-quinolinone B + NADP(+) + H2O. It participates in secondary metabolite biosynthesis. It functions in the pathway alkaloid biosynthesis. Its pathway is mycotoxin biosynthesis. Functionally, FAD-dependent monooxygenase; part of the gene cluster that mediates the biosynthesis of penigequinolones, potent insecticidal alkaloids that contain a highly modified 10-carbon prenyl group. The first stage is catalyzed by the nonribosomal peptide synthetase penN that condenses anthranilic acid and O-methyl-L-tyrosine to produce 4'-methoxycyclopeptin. 4'-methoxycyclopeptin is then converted to 4'-methoxydehydrocyclopeptin by the ketoglutarate-dependent dioxygenase penM through dehydrogenation to form a double bond between C-alpha and C-beta of the O-methyltyrosine side chain. PenM also converts its first product methoxydehydrocyclopeptin to 4'-methoxycyclopenin. The following conversion of 4'methoxycyclopenin into 4'-methoxyviridicatin is catalyzed by the cyclopenase penL. 4'-methoxyviridicatin is the precursor of quinolone natural products, and is further converted to quinolinone B. The prenyltransferase penI then catalyzes the canonical Friedel-Crafts alkylation of quinolinone B with dimethylallyl cation to yield dimethylallyl quinolone, which is subjected to FAD-dependent dehydrogenation by the FAD-linked oxidoreductase penH to yield conjugated aryl diene. The delta(3') double bond then serves as the site of the second alkylation with DMAPP catalyzed by the prenyltransferase penG to yield a carbenium ion intermediate, which can be attacked by H(2)O to yield a styrenyl quinolone containing a C3'-hydroxyprenyl chain, or undergo cyclization to yield yaequinolones J1 and J2. The conversion of the styrenyl quinolone into the tetrahydrofuran-containing yaequinolone C is performed by the FAD-dependent monooxygenase penE and involves epoxidation of the terminal C7'-C8' olefin, followed by epoxide ring opening initiated by the C3' hydroxyl group. The predicted cysteine hydrolase penJ acts as an epoxide hydrolase that enhances the rate of the 5-exo-tet cyclization step, increasing the yield of yaequinolone C. PenF catalyzes the cationic rearrangement of the epoxide formed by penE (before ring opening to produce yaequinolone C) into yaequinolone D. Finally, the short-chain dehydrogenase/reductase (SDR)-like reductase penD, catalyzes both the dehydration of yaequinolone D and the reduction of the resulting oxonium to yield penigequinolone. In Penicillium thymicola, this protein is FAD-dependent monooxygenase penE.